Reading from the N-terminus, the 867-residue chain is Mitochondrial escape protein 2 (867 aa).

Residues 1–25 (MIIRTLRSQLRLPKPVYISPPCRYY) constitute a mitochondrion transit peptide. At 26–279 (STDLEKLKKE…LVSLISNHTK (254 aa)) the chain is on the mitochondrial matrix side. The region spanning 179–264 (GTPWIEDLRR…TTLHIQFVAI (86 aa)) is the RRM domain. Residues 280-300 (IAIPVLIALLATFAVLIFDPI) traverse the membrane as a helical segment. Topologically, residues 301 to 867 (REWFIEYKIL…DGKSFLGIKF (567 aa)) are mitochondrial intermembrane. A coiled-coil region spans residues 795 to 852 (IGRLISLEAAKIQKLEEELEKIYKIGKVDGRIDYVSQKIEASNKKILDLEKQAADVAS).

This sequence belongs to the YME2 family.

Its subcellular location is the mitochondrion inner membrane. Its function is as follows. Plays a role in maintaining the mitochondrial genome and in controlling the mtDNA escape. Involved in the regulation of mtDNA nucleotide structure and number. May have a dispensable role in early maturation of pre-rRNA. This Candida albicans (strain SC5314 / ATCC MYA-2876) (Yeast) protein is Mitochondrial escape protein 2 (PRP13).